The following is a 164-amino-acid chain: Diphosphoinositol polyphosphate phosphohydrolase 3-beta (164 aa).

Substrate contacts are provided by residues Arg-9, Lys-17 to Arg-19, and Ser-38 to Arg-40. The region spanning Lys-17–Lys-144 is the Nudix hydrolase domain. 2 residues coordinate Mg(2+): Gly-49 and Glu-65. The Nudix box signature appears at Gly-50 to Gly-71. The active-site Proton acceptor is Glu-68. Mg(2+) is bound at residue Glu-69. Substrate contacts are provided by residues Arg-89 to His-91, Arg-115, and Lys-133. The interval Lys-144 to Pro-164 is disordered. Residues Ser-148 to Pro-164 show a composition bias toward polar residues.

Belongs to the Nudix hydrolase family. DIPP subfamily. It depends on Mg(2+) as a cofactor. Mn(2+) is required as a cofactor. In terms of tissue distribution, mainly expressed in testis and, at lower level in brain. According to PubMed:12121577, it is also expressed in pancreas and weakly expressed in thymus, prostate, ovary, lung, small intestine and heart.

Its subcellular location is the cytoplasm. It catalyses the reaction diphospho-myo-inositol polyphosphate + H2O = myo-inositol polyphosphate + phosphate.. It carries out the reaction P(1),P(6)-bis(5'-adenosyl) hexaphosphate + H2O = adenosine 5'-pentaphosphate + AMP + 2 H(+). The enzyme catalyses P(1),P(5)-bis(5'-adenosyl) pentaphosphate + H2O = adenosine 5'-tetraphosphate + AMP + 2 H(+). Functionally, cleaves a beta-phosphate from the diphosphate groups in PP-InsP5 (diphosphoinositol pentakisphosphate), suggesting that it may play a role in signal transduction. Also able to catalyze the hydrolysis of dinucleoside oligophosphates, with Ap6A and Ap5A being the preferred substrates. The major reaction products are ADP and p4a from Ap6A and ADP and ATP from Ap5A. Also able to hydrolyze 5-phosphoribose 1-diphosphate. The polypeptide is Diphosphoinositol polyphosphate phosphohydrolase 3-beta (Homo sapiens (Human)).